The chain runs to 97 residues: Large ribosomal subunit protein uL23 (97 aa).

This sequence belongs to the universal ribosomal protein uL23 family. Part of the 50S ribosomal subunit. Contacts protein L29, and trigger factor when it is bound to the ribosome.

One of the early assembly proteins it binds 23S rRNA. One of the proteins that surrounds the polypeptide exit tunnel on the outside of the ribosome. Forms the main docking site for trigger factor binding to the ribosome. The chain is Large ribosomal subunit protein uL23 from Sinorhizobium medicae (strain WSM419) (Ensifer medicae).